The sequence spans 78 residues: UPF0349 protein GK2958 (78 aa).

It belongs to the UPF0349 family.

The protein is UPF0349 protein GK2958 of Geobacillus kaustophilus (strain HTA426).